The primary structure comprises 142 residues: Large ribosomal subunit protein uL13 (142 aa).

Belongs to the universal ribosomal protein uL13 family. In terms of assembly, part of the 50S ribosomal subunit.

Functionally, this protein is one of the early assembly proteins of the 50S ribosomal subunit, although it is not seen to bind rRNA by itself. It is important during the early stages of 50S assembly. This is Large ribosomal subunit protein uL13 from Ruthia magnifica subsp. Calyptogena magnifica.